Reading from the N-terminus, the 109-residue chain is Flagellar hook-basal body complex protein FliE (109 aa).

It belongs to the FliE family.

Its subcellular location is the bacterial flagellum basal body. This chain is Flagellar hook-basal body complex protein FliE, found in Pseudomonas aeruginosa (strain LESB58).